The chain runs to 481 residues: Cardiolipin synthase A (481 aa).

A run of 2 helical transmembrane segments spans residues phenylalanine 10 to leucine 30 and isoleucine 40 to phenylalanine 60. 2 consecutive PLD phosphodiesterase domains span residues valine 220–tyrosine 247 and glutamine 394–serine 421. Active-site residues include histidine 225, lysine 227, aspartate 232, histidine 399, lysine 401, and aspartate 406.

The protein belongs to the phospholipase D family. Cardiolipin synthase subfamily. ClsA sub-subfamily.

It localises to the cell inner membrane. The enzyme catalyses 2 a 1,2-diacyl-sn-glycero-3-phospho-(1'-sn-glycerol) = a cardiolipin + glycerol. In terms of biological role, catalyzes the reversible phosphatidyl group transfer from one phosphatidylglycerol molecule to another to form cardiolipin (CL) (diphosphatidylglycerol) and glycerol. The protein is Cardiolipin synthase A of Pseudomonas putida (Arthrobacter siderocapsulatus).